Reading from the N-terminus, the 655-residue chain is SRSF protein kinase 1 (655 aa).

A disordered region spans residues 1–57; it reads MERKVLALQARKKRTKAKKDKAQRKSETQHRGSAPHSESDLPEQEEEILGSDDDEQE. The span at 10 to 22 shows a compositional bias: basic residues; that stretch reads ARKKRTKAKKDKA. Positions 40–57 are enriched in acidic residues; that stretch reads DLPEQEEEILGSDDDEQE. Ser51 is subject to Phosphoserine; by CK2. In terms of domain architecture, Protein kinase spans 80–653; it reads YHVIRKLGWG…AAECLRHPWL (574 aa). Residues 86–94, Lys109, and 166–168 each bind ATP; these read LGWGHFSTV and EVL. The active-site Proton acceptor is the Asp213. Disordered regions lie at residues 238-341 and 397-417; these read WQRS…QDQT and FLSS…CTPI. Over residues 265–276 the composition is skewed to basic residues; the sequence is KNKKKKLKKKQK. Basic and acidic residues-rich tracts occupy residues 277-288 and 304-318; these read RQAELLEKRMQE and NKQE…RPLK. Phosphoserine is present on residues Ser309, Ser311, and Ser333. Position 555 is a phosphoserine; by CK2 (Ser555).

Belongs to the protein kinase superfamily. CMGC Ser/Thr protein kinase family. As to quaternary structure, monomer. Isoform 2 is found in a multisubunit complex containing seven proteins, named toposome, which separates entangled circular chromatin DNA during chromosome segregation. Isoform 2 interacts with DNAJC8 and AHSA1/AHA1 and this mediates formation of a complex with the Hsp70 /Hsp90 machinery. Isoform 1 is found in a complex with: DHX9, MOV10, MATR3, HNRNPU, NCL, DDX21, HSD17B4, PABPC1, HNRNPM, IGF2BP1, SYNCRIP, RPL3, VIM, YBX1, NPM1, HNRNPA2B1, HNRNPC, RPLP0, RPL7A and RALY. Isoform 2 binds to IGF2BP1, SYNCRIP, HNRNPA2B1 and HNRNPC. Isoform 1 and isoform 2 interact with SAFB which inhibits its activity. Isoform 2 interacts with SAFB2 which inhibits its activity. (Microbial infection) Isoform 2 interacts with HHV-1 ICP27 protein. Requires Mg(2+) as cofactor. As to expression, isoform 2 is predominantly expressed in the testis but is also present at lower levels in heart, ovary, small intestine, liver, kidney, pancreas and skeletal muscle. Isoform 1 is only seen in the testis, at lower levels than isoform 2. Highly expressed in different erythroid and lymphoid cell lines, with isoform 2 being far more abundant than isoform 1.

It is found in the cytoplasm. It localises to the nucleus. The protein localises to the nucleus matrix. The protein resides in the microsome. Its subcellular location is the nucleoplasm. It is found in the nucleus speckle. It localises to the chromosome. The catalysed reaction is L-seryl-[protein] + ATP = O-phospho-L-seryl-[protein] + ADP + H(+). It carries out the reaction L-threonyl-[protein] + ATP = O-phospho-L-threonyl-[protein] + ADP + H(+). With respect to regulation, activated by phosphorylation on Ser-51 and Ser-555. Functionally, serine/arginine-rich protein-specific kinase which specifically phosphorylates its substrates at serine residues located in regions rich in arginine/serine dipeptides, known as RS domains and is involved in the phosphorylation of SR splicing factors and the regulation of splicing. Plays a central role in the regulatory network for splicing, controlling the intranuclear distribution of splicing factors in interphase cells and the reorganization of nuclear speckles during mitosis. Can influence additional steps of mRNA maturation, as well as other cellular activities, such as chromatin reorganization in somatic and sperm cells and cell cycle progression. Isoform 2 phosphorylates SFRS2, ZRSR2, LBR and PRM1. Isoform 2 phosphorylates SRSF1 using a directional (C-terminal to N-terminal) and a dual-track mechanism incorporating both processive phosphorylation (in which the kinase stays attached to the substrate after each round of phosphorylation) and distributive phosphorylation steps (in which the kinase and substrate dissociate after each phosphorylation event). The RS domain of SRSF1 binds first to a docking groove in the large lobe of the kinase domain of SRPK1. This induces certain structural changes in SRPK1 and/or RRM2 domain of SRSF1, allowing RRM2 to bind the kinase and initiate phosphorylation. The cycles continue for several phosphorylation steps in a processive manner (steps 1-8) until the last few phosphorylation steps (approximately steps 9-12). During that time, a mechanical stress induces the unfolding of the beta-4 motif in RRM2, which then docks at the docking groove of SRPK1. This also signals RRM2 to begin to dissociate, which facilitates SRSF1 dissociation after phosphorylation is completed. Isoform 2 can mediate hepatitis B virus (HBV) core protein phosphorylation. It plays a negative role in the regulation of HBV replication through a mechanism not involving the phosphorylation of the core protein but by reducing the packaging efficiency of the pregenomic RNA (pgRNA) without affecting the formation of the viral core particles. Isoform 1 and isoform 2 can induce splicing of exon 10 in MAPT/TAU. The ratio of isoform 1/isoform 2 plays a decisive role in determining cell fate in K-562 leukaemic cell line: isoform 2 favors proliferation where as isoform 1 favors differentiation. This is SRSF protein kinase 1 from Homo sapiens (Human).